The chain runs to 1497 residues: ABC multidrug transporter C (1497 aa).

The span at 1–13 (MSLLGTINPNINP) shows a compositional bias: polar residues. The tract at residues 1–21 (MSLLGTINPNINPERTVAGRG) is disordered. N-linked (GlcNAc...) asparagine glycosylation is found at Asn137 and Asn336. An ABC transporter 1 domain is found at 158 to 412 (LEVGTLVRRI…FTNMGFECPE (255 aa)). The next 5 helical transmembrane spans lie at 523 to 543 (LTMSQLIGNFIMALVIGSVFY), 557 to 577 (ALLFFAVLLNAFSSALEILTL), 599 to 621 (AIASMLCDMPYKITNAIIFNLTL), 632 to 652 (GAFFVFLLFSFVTTLTMSMLF), and 665 to 685 (ALVPAAILILGLVIYTGFTIP). Asn762 carries N-linked (GlcNAc...) asparagine glycosylation. A helical transmembrane segment spans residues 777–797 (GIMFGFMFFFMFTYLTATEYI). The segment at 815–843 (QPTGSHDVEKSPEVSSAAKTDEASSKEAT) is disordered. Residues 853-1096 (FQWKDVCYDI…LASYFERNGA (244 aa)) form the ABC transporter 2 domain. Residue 889-896 (GVSGAGKT) coordinates ATP. The next 5 helical transmembrane spans lie at 1192 to 1212 (YIYSKTALCVLTALYIGFSFF), 1226 to 1246 (FSIFMLMTIFGNLVQQIMPNF), 1273 to 1293 (IIVELPWNTLMAFLIFVCWYY), 1313 to 1333 (LMFLLIWSFLLFTSTFAHMMI), and 1352 to 1372 (LCLIFCGVLAPPQSLPGFWIF). A glycan (N-linked (GlcNAc...) asparagine) is linked at Asn1411. The chain crosses the membrane as a helical span at residues 1464 to 1484 (FGIMWAYIIFNIFAAVFIYWL).

The protein belongs to the ABC transporter superfamily. ABCG family. PDR (TC 3.A.1.205) subfamily.

Its subcellular location is the cell membrane. It carries out the reaction fluconazole(in) + ATP + H2O = fluconazole(out) + ADP + phosphate + H(+). The catalysed reaction is itraconazole(in) + ATP + H2O = itraconazole(out) + ADP + phosphate + H(+). It catalyses the reaction voriconazole(in) + ATP + H2O = voriconazole(out) + ADP + phosphate + H(+). The efflux inhibitor FK506 impairs the transport activity. Its function is as follows. Pleiotropic ABC efflux transporter that shows a strong substrate specificity for the azole class of drugs such as lotrimazole (CLT), fluconazole (FLC), itraconazole (ITC), ketoconazole (KTC), posaconazole (POS), tebuconazole (TEBZ), and voriconazole (VRC). Is also able to transport rhodamine 6G (R-6G), a known substrate for many ABC transporters. Required for normal pathogenesis in a Galleria mellonella (greater wax moth) infection model. The sequence is that of ABC multidrug transporter C from Aspergillus fumigatus (strain ATCC MYA-4609 / CBS 101355 / FGSC A1100 / Af293) (Neosartorya fumigata).